Here is a 255-residue protein sequence, read N- to C-terminus: Glutamate racemase (255 aa).

Substrate-binding positions include 7–8 and 39–40; these read DS and YG. Catalysis depends on C70, which acts as the Proton donor/acceptor. 71 to 72 serves as a coordination point for substrate; the sequence is NT. C181 functions as the Proton donor/acceptor in the catalytic mechanism. 182–183 contributes to the substrate binding site; that stretch reads TH.

The protein belongs to the aspartate/glutamate racemases family.

It catalyses the reaction L-glutamate = D-glutamate. Its pathway is cell wall biogenesis; peptidoglycan biosynthesis. Functionally, provides the (R)-glutamate required for cell wall biosynthesis. The polypeptide is Glutamate racemase (Helicobacter pylori (strain ATCC 700392 / 26695) (Campylobacter pylori)).